Here is a 209-residue protein sequence, read N- to C-terminus: MIGLVGKKAGMTRIFTEDGVSIPVTVIEVEANRVTQVKDLANDGYRAIQVTTGAKKANRVTKPEAGHFAKAGVEAGRGLWEFRLAEGEEFTVGQSISVELFAEVKKVDVTGTSKGKGFAGTVKRWNFRTQDATHGNSLSHRVPGSIGQNQTPGKVFKGKKMAGQMGNERVTVQSLDVVRVDAERNLLLVKGAVPGATGSDLIVKPAVKA.

Residues 133 to 152 (THGNSLSHRVPGSIGQNQTP) form a disordered region. The residue at position 150 (glutamine 150) is an N5-methylglutamine.

It belongs to the universal ribosomal protein uL3 family. As to quaternary structure, part of the 50S ribosomal subunit. Forms a cluster with proteins L14 and L19. Post-translationally, methylated by PrmB.

One of the primary rRNA binding proteins, it binds directly near the 3'-end of the 23S rRNA, where it nucleates assembly of the 50S subunit. This chain is Large ribosomal subunit protein uL3, found in Shigella sonnei (strain Ss046).